We begin with the raw amino-acid sequence, 182 residues long: MLQALLIFVLQIIYVPILTIRTILLVKNQTRSAAAVGLLEGAIYIVSLGIVFQDLSNWMNIVAYVIGFSAGLLLGGYIENKLAIGYITYQVSLLDRCNELVDELRHSGFGVTVFEGEGINSIRYRLDIVAKRSREKELLEIINEIAPKAFMSSYEIRSFKGGYLTKAMKKRALMKKKDHHVS.

A run of 3 helical transmembrane segments spans residues 6–26 (LIFV…ILLV), 32–52 (SAAA…GIVF), and 58–78 (WMNI…GGYI).

It belongs to the UPF0316 family.

Its subcellular location is the cell membrane. In Bacillus cereus (strain AH820), this protein is UPF0316 protein BCAH820_3389.